The following is a 260-amino-acid chain: Hydroxyethylthiazole kinase 1 (260 aa).

Substrate is bound at residue Met39. Residues Arg115 and Thr160 each coordinate ATP. A substrate-binding site is contributed by Gly187.

It belongs to the Thz kinase family. The cofactor is Mg(2+).

The catalysed reaction is 5-(2-hydroxyethyl)-4-methylthiazole + ATP = 4-methyl-5-(2-phosphooxyethyl)-thiazole + ADP + H(+). The protein operates within cofactor biosynthesis; thiamine diphosphate biosynthesis; 4-methyl-5-(2-phosphoethyl)-thiazole from 5-(2-hydroxyethyl)-4-methylthiazole: step 1/1. In terms of biological role, catalyzes the phosphorylation of the hydroxyl group of 4-methyl-5-beta-hydroxyethylthiazole (THZ). This Streptococcus pneumoniae (strain P1031) protein is Hydroxyethylthiazole kinase 1.